A 309-amino-acid polypeptide reads, in one-letter code: Pyridoxal kinase (309 aa).

Position 2 is an N-acetylthreonine; in Pyridoxal kinase, N-terminally processed (T2). Pyridoxal contacts are provided by S23 and T58. T58 is a binding site for pyridoxal 5'-phosphate. D124 provides a ligand contact to ATP. D124 serves as a coordination point for Na(+). D129 contacts Mg(2+). T155 is a binding site for Na(+). Residues 157-160 (NQFE), 193-194 (TS), 225-227 (IPA), and T232 contribute to the ATP site. T193 lines the Na(+) pocket. Pyridoxal 5'-phosphate is bound at residue 233–234 (GD). D234 acts as the Proton acceptor in catalysis.

This sequence belongs to the pyridoxine kinase family. As to quaternary structure, homodimer. Requires Zn(2+) as cofactor. Expressed ubiquitously in leaves, stems, roots, flowers and siliques. Present in root hairs and other tip-growing cells such as papillar cells on the top of stigma.

The catalysed reaction is pyridoxal + ATP = pyridoxal 5'-phosphate + ADP + H(+). It participates in cofactor metabolism; pyridoxal 5'-phosphate salvage; pyridoxal 5'-phosphate from pyridoxal: step 1/1. In terms of biological role, catalyzes the transfer of a phosphate group from ATP to the 5-hydroxylmethyl group of pyridoxal to form the biologically active pyridoxal phosphate, an active form of vitamin B6. Required for Na(+) and K(+) homeostasis and for salt tolerance. Involved in root hair development, both for initiation and tip growth. This chain is Pyridoxal kinase, found in Arabidopsis thaliana (Mouse-ear cress).